The sequence spans 238 residues: Zinc-finger homeodomain protein 11 (238 aa).

The segment at 12-59 adopts a ZF-HD dimerization-type; degenerate zinc-finger fold; the sequence is YRECMRNHAAKLGTYANDGCCEYTPDDGHPAGLLCAACGCHRNFHRKD. Positions 119–188 form a DNA-binding region, homeobox; the sequence is RRRTRTKFTE…NHKAGGGGGG (70 aa). Residues 183-200 are compositionally biased toward gly residues; it reads GGGGGGGGSGGPGAGGGA. The interval 183-238 is disordered; that stretch reads GGGGGGGGSGGPGAGGGAQTSSSTTRGGGDVGVGLSPAMGGDGEDDEEVRGSEMCM.

Homo- and heterodimer with other ZFHD proteins.

The protein resides in the nucleus. Putative transcription factor. This chain is Zinc-finger homeodomain protein 11 (ZHD11), found in Oryza sativa subsp. indica (Rice).